A 968-amino-acid polypeptide reads, in one-letter code: RNA polymerase-associated protein RapA (968 aa).

In terms of domain architecture, Helicase ATP-binding spans 164–334 (DVGRRHAPRV…FARLRLLDPN (171 aa)). 177 to 184 (DEVGLGKT) lines the ATP pocket. Positions 280-283 (DEAH) match the DEAH box motif. In terms of domain architecture, Helicase C-terminal spans 490 to 644 (RVEWLMGYLT…TCPTGRTVYD (155 aa)).

It belongs to the SNF2/RAD54 helicase family. RapA subfamily. In terms of assembly, interacts with the RNAP. Has a higher affinity for the core RNAP than for the holoenzyme. Its ATPase activity is stimulated by binding to RNAP.

Its function is as follows. Transcription regulator that activates transcription by stimulating RNA polymerase (RNAP) recycling in case of stress conditions such as supercoiled DNA or high salt concentrations. Probably acts by releasing the RNAP, when it is trapped or immobilized on tightly supercoiled DNA. Does not activate transcription on linear DNA. Probably not involved in DNA repair. The sequence is that of RNA polymerase-associated protein RapA from Klebsiella pneumoniae (strain 342).